A 146-amino-acid chain; its full sequence is uncharacterized protein (146 aa).

Disordered regions lie at residues 1–33 (MATFHRAHATSSVKPRARRHQEPNSGDWPGSYR) and 50–70 (QHWRPRSLGAGQGREDPSWEG).

This is an uncharacterized protein from Homo sapiens (Human).